The primary structure comprises 117 residues: Histone-like protein Hq1 (117 aa).

2 stretches are compositionally biased toward basic residues: residues 1–17 (MPAK…RSKA) and 39–50 (RKLRAAQKKLAK). The tract at residues 1–117 (MPAKKRKTTR…RGRGRPRKKA (117 aa)) is disordered. A compositionally biased stretch (basic and acidic residues) spans 51-68 (AKKDASRKLAKLRKEAAR). The span at 71-117 (AAAKKTRAPSKKGRKKATRKKGGGRSRKTARKVSTMKRGRGRPRKKA) shows a compositional bias: basic residues.

In terms of biological role, binds DNA in vitro. This is Histone-like protein Hq1 (hcbA) from Coxiella burnetii (strain RSA 493 / Nine Mile phase I).